The sequence spans 296 residues: Methylsterol monooxygenase erg25B (296 aa).

3 helical membrane-spanning segments follow: residues 50-70 (IMSFVMHEIVYFGRSVPWILI), 98-118 (FVLLSHFTVELPQIWLFHPMA), and 125-145 (TSVPFPSVWTMMYQIAIFFVL). The region spanning 140–276 (AIFFVLEDTW…FRWWDYLLDT (137 aa)) is the Fatty acid hydroxylase domain. The Histidine box-1 motif lies at 154–158 (HRALH). A Histidine box-2 motif is present at residues 167–171 (HKIHH). A helical transmembrane segment spans residues 201 to 221 (ILWCALTGDLHIFTMYVWIVL). A Histidine box-3 motif is present at residues 251–257 (HHDLHHE).

The protein belongs to the sterol desaturase family. Requires Fe cation as cofactor.

Its subcellular location is the endoplasmic reticulum membrane. It participates in steroid metabolism; ergosterol biosynthesis. Sterol-C4-methyl oxidase; part of the third module of ergosterol biosynthesis pathway that includes the late steps of the pathway. Erg25B is a catalytic component of the C-4 demethylation complex that catalyzes the conversion of 4,4-dimethylfecosterol into fecosterol via 4-methylfecosterol. The third module or late pathway involves the ergosterol synthesis itself through consecutive reactions that mainly occur in the endoplasmic reticulum (ER) membrane. Firstly, the squalene synthase erg9 catalyzes the condensation of 2 farnesyl pyrophosphate moieties to form squalene, which is the precursor of all steroids. Squalene synthase is crucial for balancing the incorporation of farnesyl diphosphate (FPP) into sterol and nonsterol isoprene synthesis. Secondly, squalene is converted into lanosterol by the consecutive action of the squalene epoxidase erg1 and the lanosterol synthase erg7. Then, the delta(24)-sterol C-methyltransferase erg6 methylates lanosterol at C-24 to produce eburicol. Eburicol is the substrate of the sterol 14-alpha demethylase encoded by cyp51A and cyp51B, to yield 4,4,24-trimethyl ergosta-8,14,24(28)-trienol. The C-14 reductase erg24 then reduces the C14=C15 double bond which leads to 4,4-dimethylfecosterol. A sequence of further demethylations at C-4, involving the C-4 demethylation complex containing the C-4 methylsterol oxidases erg25A or erg25B, the sterol-4-alpha-carboxylate 3-dehydrogenase erg26 and the 3-keto-steroid reductase erg27, leads to the production of fecosterol via 4-methylfecosterol. The C-8 sterol isomerase erg2 then catalyzes the reaction which results in unsaturation at C-7 in the B ring of sterols and thus converts fecosterol to episterol. The sterol-C5-desaturase erg3B then catalyzes the introduction of a C-5 double bond in the B ring to produce 5-dehydroepisterol. The 2 other sterol-C5-desaturases, erg3A and erg3C, seem to be less important in ergosterol biosynthesis. The C-22 sterol desaturase erg5 further converts 5-dehydroepisterol into ergosta-5,7,22,24(28)-tetraen-3beta-ol by forming the C-22(23) double bond in the sterol side chain. Finally, ergosta-5,7,22,24(28)-tetraen-3beta-ol is substrate of the C-24(28) sterol reductases erg4A and erg4B to produce ergosterol. Possible alternative sterol biosynthetic pathways might exist from fecosterol to ergosterol, depending on the activities of the erg3 isoforms. This is Methylsterol monooxygenase erg25B from Aspergillus fumigatus (strain ATCC MYA-4609 / CBS 101355 / FGSC A1100 / Af293) (Neosartorya fumigata).